We begin with the raw amino-acid sequence, 103 residues long: Potassium voltage-gated channel subfamily E member 3 (103 aa).

N5, N22, and N41 each carry an N-linked (GlcNAc...) asparagine glycan. Positions 30-52 are disordered; that stretch reads LCRPGPGPGPDNQTEDRRASLPG. Residues 57–77 form a helical membrane-spanning segment; that stretch reads SYMYILFVMFLFAVTVGSLIL. Positions 68 to 79 are interaction with KCNQ1; that stretch reads FAVTVGSLILGY. The Cytoplasmic portion of the chain corresponds to 78–103; the sequence is GYTRSRKVDKRSDPYHVYIKNRVSMI.

Belongs to the potassium channel KCNE family. As to quaternary structure, interacts with KCNB1. Interacts with KCNC2. Associates with KCNC4/Kv3.4. Interacts with KCNQ1; associates with a KCNQ1:KCNE3 stoichiometry of 4:4; produces a current with nearly instantaneous activation with a linear current-voltage relationship and alters membrane raft localization; affects KCNQ1 structure and gating properties.

The protein localises to the cell membrane. Its subcellular location is the cytoplasm. It localises to the perikaryon. It is found in the cell projection. The protein resides in the dendrite. The protein localises to the membrane raft. Functionally, ancillary protein that functions as a regulatory subunit of the voltage-gated potassium (Kv) channel complex composed of pore-forming and potassium-conducting alpha subunits and of regulatory beta subunits. KCNE3 beta subunit modulates the gating kinetics and enhances stability of the channel complex. Alters the gating of the delayed rectifier Kv channel containing KCNB1 alpha subunit. Associates with KCNC4/Kv3.4 alpha subunit to form the subthreshold Kv channel in skeletal muscle and to establish the resting membrane potential (RMP) in muscle cells. Association with KCNQ1/KCLQT1 alpha subunit may form the intestinal cAMP-stimulated potassium channel involved in chloride secretion that produces a current with nearly instantaneous activation with a linear current-voltage relationship. The protein is Potassium voltage-gated channel subfamily E member 3 of Mus musculus (Mouse).